The sequence spans 466 residues: Asparagine--tRNA ligase (466 aa).

Belongs to the class-II aminoacyl-tRNA synthetase family. In terms of assembly, homodimer.

It is found in the cytoplasm. The enzyme catalyses tRNA(Asn) + L-asparagine + ATP = L-asparaginyl-tRNA(Asn) + AMP + diphosphate + H(+). In Psychromonas ingrahamii (strain DSM 17664 / CCUG 51855 / 37), this protein is Asparagine--tRNA ligase.